A 141-amino-acid chain; its full sequence is Large ribosomal subunit protein uL11 (141 aa).

It belongs to the universal ribosomal protein uL11 family. Part of the ribosomal stalk of the 50S ribosomal subunit. Interacts with L10 and the large rRNA to form the base of the stalk. L10 forms an elongated spine to which L12 dimers bind in a sequential fashion forming a multimeric L10(L12)X complex. Post-translationally, one or more lysine residues are methylated.

In terms of biological role, forms part of the ribosomal stalk which helps the ribosome interact with GTP-bound translation factors. The chain is Large ribosomal subunit protein uL11 from Chloroflexus aurantiacus (strain ATCC 29366 / DSM 635 / J-10-fl).